Reading from the N-terminus, the 514-residue chain is 2,3-bisphosphoglycerate-independent phosphoglycerate mutase (514 aa).

Asp-13 and Ser-63 together coordinate Mn(2+). Catalysis depends on Ser-63, which acts as the Phosphoserine intermediate. Residues His-124, 154 to 155, Arg-186, Arg-192, 258 to 261, and Lys-332 each bind substrate; these read RD and RADR. Mn(2+) is bound by residues Asp-399, His-403, Asp-440, His-441, and His-459.

The protein belongs to the BPG-independent phosphoglycerate mutase family. As to quaternary structure, monomer. Mn(2+) serves as cofactor.

The enzyme catalyses (2R)-2-phosphoglycerate = (2R)-3-phosphoglycerate. The protein operates within carbohydrate degradation; glycolysis; pyruvate from D-glyceraldehyde 3-phosphate: step 3/5. Functionally, catalyzes the interconversion of 2-phosphoglycerate and 3-phosphoglycerate. This Legionella pneumophila (strain Corby) protein is 2,3-bisphosphoglycerate-independent phosphoglycerate mutase.